The sequence spans 75 residues: Protease B inhibitor 2 (75 aa).

A Phosphothreonine modification is found at T74.

The protein belongs to the protease inhibitor I9 family. As to quaternary structure, part of the heterodimeric LMA1 complex together with the thioredoxin II/TRX2. LMA1 binds to the ATPase SEC18.

It localises to the cytoplasm. Cytosolic inhibitor of vacuolar proteinase B (yscB), probably regulating protease B activity during limited proteolysis. PBI2 is a component of the LMA1 complex, which is involved in the facilitation of vesicle fusion such as homotypic vacuole and ER-derived COPII vesicle fusion with the Golgi. The sequence is that of Protease B inhibitor 2 (PBI2) from Saccharomyces cerevisiae (strain ATCC 204508 / S288c) (Baker's yeast).